The chain runs to 313 residues: Zinc transporter ZitB (313 aa).

At 1-20 (MAHSHSHTSSHLPEDNNARR) the chain is on the cytoplasmic side. Residues 21-41 (LLYAFGVTAGFMLVEVVGGFL) form a helical membrane-spanning segment. Residues 42–47 (SGSLAL) lie on the Periplasmic side of the membrane. Residues 48 to 68 (LADAGHMLTDTAALLFALLAV) form a helical membrane-spanning segment. At 69–89 (QFSRRPPTIRHTFGWLRLTTL) the chain is on the cytoplasmic side. The chain crosses the membrane as a helical span at residues 90–110 (AAFVNAIALVVITILIVWEAI). The Periplasmic segment spans residues 111–121 (ERFRTPRPVEG). The chain crosses the membrane as a helical span at residues 122–142 (GMMMAIAVAGLLANILSFWLL). The Cytoplasmic segment spans residues 143–159 (HHGSEEKNLNVRAAALH). A helical transmembrane segment spans residues 160–180 (VLGDLLGSVGAIIAALIIIWT). Position 181 (glycine 181) is a topological domain, periplasmic. The helical transmembrane segment at 182–202 (WTPADPILSILVSLLVLRSAW) threads the bilayer. The Cytoplasmic segment spans residues 203 to 313 (RLLKDSVNEL…GVSGHSHHHH (111 aa)).

The protein belongs to the cation diffusion facilitator (CDF) transporter (TC 2.A.4) family. SLC30A subfamily.

Its subcellular location is the cell inner membrane. Functionally, involved in zinc efflux across the cytoplasmic membrane, thus reducing zinc accumulation in the cytoplasm and rendering bacteria more resistant to zinc. It may contribute to zinc homeostasis at low concentrations of zinc. The polypeptide is Zinc transporter ZitB (zitB) (Shigella flexneri).